The primary structure comprises 269 residues: tRNA pseudouridine synthase A (269 aa).

D51 (nucleophile) is an active-site residue. Position 109 (Y109) interacts with substrate.

Belongs to the tRNA pseudouridine synthase TruA family. In terms of assembly, homodimer.

It carries out the reaction uridine(38/39/40) in tRNA = pseudouridine(38/39/40) in tRNA. In terms of biological role, formation of pseudouridine at positions 38, 39 and 40 in the anticodon stem and loop of transfer RNAs. This is tRNA pseudouridine synthase A from Haemophilus influenzae (strain ATCC 51907 / DSM 11121 / KW20 / Rd).